The chain runs to 213 residues: Uridine kinase (213 aa).

Gly-15 to Ser-22 contributes to the ATP binding site.

This sequence belongs to the uridine kinase family.

The protein localises to the cytoplasm. It carries out the reaction uridine + ATP = UMP + ADP + H(+). It catalyses the reaction cytidine + ATP = CMP + ADP + H(+). Its pathway is pyrimidine metabolism; CTP biosynthesis via salvage pathway; CTP from cytidine: step 1/3. The protein operates within pyrimidine metabolism; UMP biosynthesis via salvage pathway; UMP from uridine: step 1/1. In Klebsiella pneumoniae (strain 342), this protein is Uridine kinase.